Reading from the N-terminus, the 912-residue chain is Phosphoenolpyruvate carboxylase (912 aa).

Active-site residues include His138 and Lys575.

It belongs to the PEPCase type 1 family. Mg(2+) serves as cofactor.

It carries out the reaction oxaloacetate + phosphate = phosphoenolpyruvate + hydrogencarbonate. Its function is as follows. Forms oxaloacetate, a four-carbon dicarboxylic acid source for the tricarboxylic acid cycle. The protein is Phosphoenolpyruvate carboxylase of Lactobacillus acidophilus (strain ATCC 700396 / NCK56 / N2 / NCFM).